The sequence spans 195 residues: Ras-related protein Rab-31 (195 aa).

GTP-binding residues include glycine 16, glycine 18, lysine 19, serine 20, serine 21, aspartate 32, and histidine 33. Serine 20 provides a ligand contact to Mg(2+). 2 consecutive short sequence motifs (switch) follow at residues 30-42 and 63-79; these read HFDH…IGAS and AGQE…YRGS. Serine 36 carries the post-translational modification Phosphoserine. GTP is bound by residues threonine 38, glycine 64, asparagine 119, aspartate 122, alanine 150, and lysine 151. Mg(2+) is bound at residue threonine 38. Residues cysteine 194 and cysteine 195 are each lipidated (S-geranylgeranyl cysteine).

The protein belongs to the small GTPase superfamily. Rab family. Interacts (in GDP-bound form) with RIN3 and GAPVD1, which function as guanine exchange factors (GEF). Interacts (in GTP-bound form) with EEA1. Interacts with NGFR. Interacts with EGFR. Interacts with OCRL. Interacts (in GTP-bound form) with APPL2; interaction contributes to or enhances recruitment of APPL2 to the phagosomes; interaction enhances Fc-gamma receptor-mediated phagocytosis through PI3K/Akt signaling in macrophages. Mg(2+) serves as cofactor. Detected in brain astrocytes, spleen and intestine (at protein level).

The protein resides in the early endosome. The protein localises to the golgi apparatus. It is found in the trans-Golgi network. Its subcellular location is the trans-Golgi network membrane. It localises to the cytoplasmic vesicle. The protein resides in the phagosome. The protein localises to the phagosome membrane. The enzyme catalyses GTP + H2O = GDP + phosphate + H(+). Regulated by guanine nucleotide exchange factors (GEFs) including RIN3 and GAPVD1 which promote the exchange of bound GDP for free GTP. Regulated by GTPase activating proteins (GAPs) which increase the GTP hydrolysis activity. Inhibited by GDP dissociation inhibitors (GDIs) which prevent Rab-GDP dissociation. The small GTPases Rab are key regulators of intracellular membrane trafficking, from the formation of transport vesicles to their fusion with membranes. Rabs cycle between an inactive GDP-bound form and an active GTP-bound form that is able to recruit to membranes different set of downstream effectors directly responsible for vesicle formation, movement, tethering and fusion. Required for the integrity and for normal function of the Golgi apparatus and the trans-Golgi network. Plays a role in insulin-stimulated translocation of GLUT4 to the cell membrane. Plays a role in the maturation of phagosomes that engulf pathogens, such as S.aureus and Mycobacterium. Plays a role in M6PR transport from the trans-Golgi network to endosomes. Plays a role in the internalization of EGFR from the cell membrane into endosomes. The polypeptide is Ras-related protein Rab-31 (Rattus norvegicus (Rat)).